We begin with the raw amino-acid sequence, 101 residues long: YcgL domain-containing protein ABBFA_001807 (101 aa).

A YcgL domain is found at 1–92 (MHCDIYRSSK…PPEGLINPNA (92 aa)).

This is YcgL domain-containing protein ABBFA_001807 from Acinetobacter baumannii (strain AB307-0294).